The sequence spans 270 residues: MAVITKIEVQKRTKERFNIYIDKGQGEEYGFSVNQAVLIKHGLQKGLEIDEVEIANILYNEEVQKAYLQAISYLSYQMRTKQEVEEYLRKKEVGQAIISEVISKLLHDRYINDKEYAVLYVRTQSNVNQKGPSVIRKELLRKGVQEVIITHSLQEYPKEKQVDNAFMLIEKKKRSYQKHSFLQMKQKLEDMLIRKGFSRDVIQICLEELKEEKDDSKQQEALYYHGNKYYEKYKKYDGWTFENKMKQALYRKGFSIDEIEGFLQMKCEEG.

Belongs to the RecX family.

The protein resides in the cytoplasm. Modulates RecA activity. This chain is Regulatory protein RecX, found in Bacillus cytotoxicus (strain DSM 22905 / CIP 110041 / 391-98 / NVH 391-98).